Here is a 448-residue protein sequence, read N- to C-terminus: Glucose-6-phosphate isomerase (448 aa).

Residue E290 is the Proton donor of the active site. Active-site residues include H311 and K425.

It belongs to the GPI family.

It localises to the cytoplasm. The enzyme catalyses alpha-D-glucose 6-phosphate = beta-D-fructose 6-phosphate. Its pathway is carbohydrate biosynthesis; gluconeogenesis. It functions in the pathway carbohydrate degradation; glycolysis; D-glyceraldehyde 3-phosphate and glycerone phosphate from D-glucose: step 2/4. Its function is as follows. Catalyzes the reversible isomerization of glucose-6-phosphate to fructose-6-phosphate. The protein is Glucose-6-phosphate isomerase of Oceanobacillus iheyensis (strain DSM 14371 / CIP 107618 / JCM 11309 / KCTC 3954 / HTE831).